The primary structure comprises 1160 residues: AF4/FMR2 family member 4 (1160 aa).

The segment covering Met-1–Gln-19 has biased composition (basic and acidic residues). Disordered stretches follow at residues Met-1–Thr-42, Pro-78–His-289, Trp-322–Arg-908, and Asn-1031–Gly-1070. Polar residues predominate over residues Pro-115–Gln-128. The residue at position 120 (Ser-120) is a Phosphoserine. Over residues Arg-172–His-189 the composition is skewed to low complexity. Over residues His-193–Asp-212 the composition is skewed to basic and acidic residues. A Phosphoserine modification is found at Ser-207. The segment covering Ser-229–Lys-247 has biased composition (low complexity). 2 stretches are compositionally biased toward polar residues: residues Glu-268–Thr-280 and Tyr-360–Gln-370. A phosphoserine mark is found at Ser-382, Ser-383, Ser-384, and Ser-387. Over residues Pro-398–Glu-407 the composition is skewed to polar residues. Positions Pro-408–Ser-424 are enriched in basic and acidic residues. The span at Ser-425–Pro-457 shows a compositional bias: low complexity. Residues Ser-482, Ser-485, and Ser-486 each carry the phosphoserine modification. Composition is skewed to polar residues over residues Pro-483–Ala-496, Gly-505–Thr-523, and Ser-544–Arg-555. A Phosphoserine modification is found at Ser-544. Positions Lys-563–Ser-581 are enriched in basic and acidic residues. A Glycyl lysine isopeptide (Lys-Gly) (interchain with G-Cter in SUMO2) cross-link involves residue Lys-578. Residues Ser-594–Asn-607 are compositionally biased toward basic residues. Positions Ile-608 to Lys-622 are enriched in basic and acidic residues. The span at Thr-641–Ser-657 shows a compositional bias: low complexity. At Ser-666 the chain carries Phosphoserine. At Thr-669 the chain carries Phosphothreonine. 4 positions are modified to phosphoserine: Ser-675, Ser-689, Ser-698, and Ser-701. Tyr-707 is subject to Phosphotyrosine. Basic and acidic residues-rich tracts occupy residues Pro-725–Ser-756, Lys-764–Ser-784, and Glu-794–Leu-806. The residue at position 809 (Ser-809) is a Phosphoserine. N6-acetyllysine is present on Lys-817. Ser-831 carries the phosphoserine modification. Low complexity-rich tracts occupy residues Ser-831–Ala-859 and Pro-880–Ser-895. Ser-1040, Ser-1052, Ser-1055, and Ser-1059 each carry phosphoserine. A compositionally biased stretch (low complexity) spans Ser-1059–Gly-1070.

Belongs to the AF4 family. Component of the super elongation complex (SEC), at least composed of EAF1, EAF2, CDK9, MLLT3/AF9, AFF (AFF1 or AFF4), the P-TEFb complex and ELL (ELL, ELL2 or ELL3). Interacts with ELL2; the interaction is direct and leads to stabilize ELL2 and prevent ELL2 ubiquitination and degradation. Interacts with ELL3; the interaction is direct. Post-translationally, dephosphorylated at Ser-544 by the PNUTS-PP1 complex, promoting RNA polymerase II transcription pause-release. As to expression, highly expressed in testis by Sertoli cells, and at low levels in other tissues.

The protein localises to the nucleus. The protein resides in the chromosome. In terms of biological role, key component of the super elongation complex (SEC), a complex required to increase the catalytic rate of RNA polymerase II transcription by suppressing transient pausing by the polymerase at multiple sites along the DNA. In the SEC complex, AFF4 acts as a central scaffold that recruits other factors through direct interactions with ELL proteins (ELL, ELL2 or ELL3) and the P-TEFb complex. The polypeptide is AF4/FMR2 family member 4 (Aff4) (Mus musculus (Mouse)).